The primary structure comprises 90 residues: Co-chaperonin GroES (90 aa).

This sequence belongs to the GroES chaperonin family. In terms of assembly, heptamer of 7 subunits arranged in a ring. Interacts with the chaperonin GroEL.

It is found in the cytoplasm. Functionally, together with the chaperonin GroEL, plays an essential role in assisting protein folding. The GroEL-GroES system forms a nano-cage that allows encapsulation of the non-native substrate proteins and provides a physical environment optimized to promote and accelerate protein folding. GroES binds to the apical surface of the GroEL ring, thereby capping the opening of the GroEL channel. This Fusobacterium nucleatum subsp. polymorphum (Fusobacterium polymorphum) protein is Co-chaperonin GroES.